Consider the following 609-residue polypeptide: Interleukin-1 receptor-associated kinase 3 (609 aa).

The Death domain maps to 41 to 106 (WRGLAERLSN…RAIHLIINYG (66 aa)). Position 110 is a phosphothreonine (Thr-110). The 286-residue stretch at 178 to 463 (FHKDFLIGEG…SSLESTQPSL (286 aa)) folds into the Protein kinase domain. Residues 184-192 (IGEGEIFEV), Lys-205, 308-311 (SSAN), and Asp-324 contribute to the ATP site. Ser-480 is modified (phosphoserine).

The protein belongs to the protein kinase superfamily. TKL Ser/Thr protein kinase family. Pelle subfamily. Monomer. Homodimer. May interact with IRAK4 (when phosphorylated). Interacts (when phosphorylated at Thr-110) with PIN1 (via WW domain) in response to IL33-mediated (but not TLR4 ligand LPS) dendritic cell stimulation. In terms of tissue distribution, expressed in inflamed lung macrophages (at protein level). Expressed in dendritic cells (at protein level). Highly expressed in liver and thymus and at lower levels in heart, brain, spleen and kidney.

It localises to the cytoplasm. It is found in the nucleus. Putative inactive protein kinase which regulates signaling downstream of immune receptors including IL1R and Toll-like receptors. Inhibits dissociation of IRAK1 and IRAK4 from the Toll-like receptor signaling complex by either inhibiting the phosphorylation of IRAK1 and IRAK4 or stabilizing the receptor complex. Upon IL33-induced lung inflammation, positively regulates expression of IL6, CSF3, CXCL2 and CCL5 mRNAs in dendritic cells. This is Interleukin-1 receptor-associated kinase 3 from Mus musculus (Mouse).